The chain runs to 645 residues: Mediator of RNA polymerase II transcription subunit 17 (645 aa).

The protein belongs to the Mediator complex subunit 17 family. Component of the Mediator complex.

It is found in the nucleus. In terms of biological role, component of the Mediator complex, a coactivator involved in the regulated transcription of nearly all RNA polymerase II-dependent genes. Mediator functions as a bridge to convey information from gene-specific regulatory proteins to the basal RNA polymerase II transcription machinery. Mediator is recruited to promoters by direct interactions with regulatory proteins and serves as a scaffold for the assembly of a functional preinitiation complex with RNA polymerase II and the general transcription factors. This is Mediator of RNA polymerase II transcription subunit 17 (MED17) from Aedes aegypti (Yellowfever mosquito).